We begin with the raw amino-acid sequence, 158 residues long: NAD(P)H-quinone oxidoreductase subunit J, chloroplastic (158 aa).

It belongs to the complex I 30 kDa subunit family. In terms of assembly, NDH is composed of at least 16 different subunits, 5 of which are encoded in the nucleus.

The protein localises to the plastid. The protein resides in the chloroplast thylakoid membrane. The catalysed reaction is a plastoquinone + NADH + (n+1) H(+)(in) = a plastoquinol + NAD(+) + n H(+)(out). It carries out the reaction a plastoquinone + NADPH + (n+1) H(+)(in) = a plastoquinol + NADP(+) + n H(+)(out). NDH shuttles electrons from NAD(P)H:plastoquinone, via FMN and iron-sulfur (Fe-S) centers, to quinones in the photosynthetic chain and possibly in a chloroplast respiratory chain. The immediate electron acceptor for the enzyme in this species is believed to be plastoquinone. Couples the redox reaction to proton translocation, and thus conserves the redox energy in a proton gradient. This chain is NAD(P)H-quinone oxidoreductase subunit J, chloroplastic, found in Crucihimalaya wallichii (Rock-cress).